Reading from the N-terminus, the 239-residue chain is Chlorate reductase subunit gamma (239 aa).

An N-terminal signal peptide occupies residues Met1–Ala27. His74 and Met138 together coordinate heme b.

As to quaternary structure, heterotrimer of alpha, beta and gamma subunits. The cofactor is heme b.

The protein resides in the periplasm. Its function is as follows. May transfer electrons to the iron-sulfur centers of ClrB. This chain is Chlorate reductase subunit gamma (clrC), found in Ideonella dechloratans.